The chain runs to 240 residues: MATLFIADLHLCVEEPAITAGFLRFLAGEARKADALYILGDLFEAWIGDDDPNPLHHQMAAAIKAVSDSGVPCYFIHGNRDFLLGKRFARESGMTLLPEEKVLELYGRRVLIMHGDTLCTDDAGYQAFRAKVHKPWLQTLFLALPLFVRKRIAARMRANSKEANSSKSLAIMDVNQNAVVSAMEKHQVQWLIHGHTHRPAVHELIANQQPAFRVVLGAWHTEGSMVKVTADDVELIHFPF.

Residues D8, H10, D41, N79, and H114 each coordinate Mn(2+). 79–80 lines the substrate pocket; the sequence is NR. The substrate site is built by D122, S160, N164, K167, and H195. 2 residues coordinate Mn(2+): H195 and H197.

This sequence belongs to the LpxH family. It depends on Mn(2+) as a cofactor.

Its subcellular location is the cell inner membrane. It carries out the reaction UDP-2-N,3-O-bis[(3R)-3-hydroxytetradecanoyl]-alpha-D-glucosamine + H2O = 2-N,3-O-bis[(3R)-3-hydroxytetradecanoyl]-alpha-D-glucosaminyl 1-phosphate + UMP + 2 H(+). It functions in the pathway glycolipid biosynthesis; lipid IV(A) biosynthesis; lipid IV(A) from (3R)-3-hydroxytetradecanoyl-[acyl-carrier-protein] and UDP-N-acetyl-alpha-D-glucosamine: step 4/6. Hydrolyzes the pyrophosphate bond of UDP-2,3-diacylglucosamine to yield 2,3-diacylglucosamine 1-phosphate (lipid X) and UMP by catalyzing the attack of water at the alpha-P atom. Involved in the biosynthesis of lipid A, a phosphorylated glycolipid that anchors the lipopolysaccharide to the outer membrane of the cell. The protein is UDP-2,3-diacylglucosamine hydrolase of Escherichia coli (strain UTI89 / UPEC).